The sequence spans 1011 residues: CRM-domain containing factor CFM2, chloroplastic (1011 aa).

Residues 1–45 (MLLPLFHQQPLILAKTFPDRIFPPFLVPNTLVSRRNVSRANSGIF) constitute a chloroplast transit peptide. Residues 77-90 (HDSPTRRITGEESG) are compositionally biased toward basic and acidic residues. The tract at residues 77–96 (HDSPTRRITGEESGKNSPGE) is disordered. CRM domains are found at residues 164 to 260 (LTLP…YFVS), 376 to 473 (PKLT…AVSS), and 577 to 677 (EGIT…QCLR). Disordered stretches follow at residues 721–810 (DSAT…GNSL) and 841–872 (LNAN…DGLV). The span at 722–736 (SATNETWSDGESSNM) shows a compositional bias: polar residues. A compositionally biased stretch (basic and acidic residues) spans 743–757 (ENQHTEPEKAREKIE). The segment covering 762–771 (SDLSVPSSGE) has biased composition (polar residues). Over residues 772–782 (ENWEDDSEGEV) the composition is skewed to acidic residues. A compositionally biased stretch (polar residues) spans 849 to 859 (GSSTGSGSQIS). The CRM 4 domain maps to 873 to 972 (TDLSNRERLI…WGAEEEMKSF (100 aa)).

Interacts with RNA. Part of large ribonucleo-protein particles that contain CAF1 and/or CAF2.

The protein resides in the plastid. The protein localises to the chloroplast stroma. Functionally, binds specific group II introns in chloroplasts and facilitates their splicing. Acts on both subgroup IIA and subgroup IIB introns. The substrates of the subgroup IIB also require the CRM domain proteins CAF1 or CAF2, with a simultaneous binding of CFM2 and CAF1 or CAF2. Can bind to and promote the splicing of the single group I intron in chloroplast tRNA transcript of trnL-UAA gene. This chain is CRM-domain containing factor CFM2, chloroplastic, found in Arabidopsis thaliana (Mouse-ear cress).